Consider the following 407-residue polypeptide: Carbamoyl phosphate synthase small chain (407 aa).

The interval 1 to 205 (MTETTPKTAP…LQDGYGEQDA (205 aa)) is CPSase. Positions 60, 257, and 259 each coordinate L-glutamine. The region spanning 209-397 (HVVALDFGVK…INLIRERKGQ (189 aa)) is the Glutamine amidotransferase type-1 domain. Cys286 functions as the Nucleophile in the catalytic mechanism. Residues Leu287, Gln290, Asn328, Gly330, and Phe331 each coordinate L-glutamine. Residues His370 and Glu372 contribute to the active site.

The protein belongs to the CarA family. As to quaternary structure, composed of two chains; the small (or glutamine) chain promotes the hydrolysis of glutamine to ammonia, which is used by the large (or ammonia) chain to synthesize carbamoyl phosphate. Tetramer of heterodimers (alpha,beta)4.

It carries out the reaction hydrogencarbonate + L-glutamine + 2 ATP + H2O = carbamoyl phosphate + L-glutamate + 2 ADP + phosphate + 2 H(+). It catalyses the reaction L-glutamine + H2O = L-glutamate + NH4(+). It functions in the pathway amino-acid biosynthesis; L-arginine biosynthesis; carbamoyl phosphate from bicarbonate: step 1/1. Its pathway is pyrimidine metabolism; UMP biosynthesis via de novo pathway; (S)-dihydroorotate from bicarbonate: step 1/3. Functionally, small subunit of the glutamine-dependent carbamoyl phosphate synthetase (CPSase). CPSase catalyzes the formation of carbamoyl phosphate from the ammonia moiety of glutamine, carbonate, and phosphate donated by ATP, constituting the first step of 2 biosynthetic pathways, one leading to arginine and/or urea and the other to pyrimidine nucleotides. The small subunit (glutamine amidotransferase) binds and cleaves glutamine to supply the large subunit with the substrate ammonia. The polypeptide is Carbamoyl phosphate synthase small chain (Brucella suis (strain ATCC 23445 / NCTC 10510)).